Consider the following 157-residue polypeptide: Transmembrane protein 50A (157 aa).

The residue at position 2 (Ser-2) is an N-acetylserine. Position 2 is a phosphoserine (Ser-2). The next 4 membrane-spanning stretches (helical) occupy residues 26 to 46 (IAAGVLFFTGWWIIIDAAVMY), 58 to 78 (TCGVIATIAFLMINAVSNGQV), 95 to 115 (IWLFIGFMLAFGSLIASMWIL), and 126 to 146 (VVYPGIAVFFQNAFIFFGGLV).

It belongs to the UPF0220 family.

The protein resides in the membrane. The sequence is that of Transmembrane protein 50A (Tmem50a) from Mus musculus (Mouse).